We begin with the raw amino-acid sequence, 242 residues long: C-reactive protein 3.3 (242 aa).

An N-terminal signal peptide occupies residues 1–24 (MKTFHGPTCGTAVSLCLLLFLTSA). The 212-residue stretch at 30–241 (ITSKVKFPPS…GVVLSPNEIC (212 aa)) folds into the Pentraxin (PTX) domain. The phosphocholine site is built by T60 and Y63. 2 disulfide bridges follow: C62-C125 and C112-C144. Ca(2+) contacts are provided by D85 and N86. Residue N147 is glycosylated (N-linked (GlcNAc...) asparagine). Positions 169, 170, and 180 each coordinate Ca(2+). C207 and C241 are disulfide-bonded.

The protein belongs to the pentraxin family. In terms of assembly, homopentamer. Pentraxin (or pentaxin) have a discoid arrangement of 5 non-covalently bound subunits. Ca(2+) serves as cofactor.

It localises to the secreted. Might serve the role of immunoglobulins. The sequence is that of C-reactive protein 3.3 from Limulus polyphemus (Atlantic horseshoe crab).